Consider the following 202-residue polypeptide: Imidazoleglycerol-phosphate dehydratase (202 aa).

Belongs to the imidazoleglycerol-phosphate dehydratase family.

The protein localises to the cytoplasm. It carries out the reaction D-erythro-1-(imidazol-4-yl)glycerol 3-phosphate = 3-(imidazol-4-yl)-2-oxopropyl phosphate + H2O. The protein operates within amino-acid biosynthesis; L-histidine biosynthesis; L-histidine from 5-phospho-alpha-D-ribose 1-diphosphate: step 6/9. This chain is Imidazoleglycerol-phosphate dehydratase, found in Acinetobacter baumannii (strain SDF).